A 152-amino-acid polypeptide reads, in one-letter code: Nucleoside diphosphate kinase (152 aa).

ATP-binding residues include Lys10, Phe58, Arg86, Thr92, Arg103, and Asn113. Catalysis depends on His116, which acts as the Pros-phosphohistidine intermediate.

The protein belongs to the NDK family. Mg(2+) serves as cofactor.

It is found in the cytoplasm. The enzyme catalyses a 2'-deoxyribonucleoside 5'-diphosphate + ATP = a 2'-deoxyribonucleoside 5'-triphosphate + ADP. The catalysed reaction is a ribonucleoside 5'-diphosphate + ATP = a ribonucleoside 5'-triphosphate + ADP. Functionally, major role in the synthesis of nucleoside triphosphates other than ATP. The ATP gamma phosphate is transferred to the NDP beta phosphate via a ping-pong mechanism, using a phosphorylated active-site intermediate. This is Nucleoside diphosphate kinase from Methanosphaera stadtmanae (strain ATCC 43021 / DSM 3091 / JCM 11832 / MCB-3).